We begin with the raw amino-acid sequence, 741 residues long: Transketolase, chloroplastic (741 aa).

The N-terminal 67 residues, 1–67 (MASSSSLTLS…TKQQFSVRAS (67 aa)), are a transit peptide targeting the chloroplast. Position 103 (His-103) interacts with substrate. Thiamine diphosphate contacts are provided by residues His-143 and 192-194 (GPL). Asp-233 provides a ligand contact to Mg(2+). Residues Gly-234 and Asn-263 each coordinate thiamine diphosphate. Mg(2+) is bound by residues Asn-263 and Ile-265. Positions 340, 434, and 461 each coordinate substrate. A thiamine diphosphate-binding site is contributed by His-340. Residues Glu-488 and Phe-515 each contribute to the thiamine diphosphate site. Glu-488 serves as the catalytic Proton donor. His-539, Asp-547, and Arg-598 together coordinate substrate.

The protein belongs to the transketolase family. Homodimer. Requires Mg(2+) as cofactor. Ca(2+) serves as cofactor. The cofactor is Mn(2+). Co(2+) is required as a cofactor. It depends on thiamine diphosphate as a cofactor.

The protein resides in the plastid. The protein localises to the chloroplast thylakoid membrane. The catalysed reaction is D-sedoheptulose 7-phosphate + D-glyceraldehyde 3-phosphate = aldehydo-D-ribose 5-phosphate + D-xylulose 5-phosphate. The protein operates within carbohydrate biosynthesis; Calvin cycle. Its function is as follows. Catalyzes the reversible transfer of a two-carbon ketol group from fructose-6-phosphate or sedoheptulose-7-phosphate to glyceraldehyde-3-phosphate to yield xylulose-5-phosphate and erythrose-4-phosphate or ribose-5-phosphate, respectively. This is Transketolase, chloroplastic from Solanum tuberosum (Potato).